We begin with the raw amino-acid sequence, 60 residues long: Large ribosomal subunit protein bL32 (60 aa).

Basic residues predominate over residues 1–19; sequence MGVPKRKTSKGRRDKRRAH. The tract at residues 1–20 is disordered; sequence MGVPKRKTSKGRRDKRRAHL.

It belongs to the bacterial ribosomal protein bL32 family.

This chain is Large ribosomal subunit protein bL32, found in Syntrophobacter fumaroxidans (strain DSM 10017 / MPOB).